A 211-amino-acid polypeptide reads, in one-letter code: Germin-like protein subfamily 3 member 3 (211 aa).

The signal sequence occupies residues 1-20 (MKMIIQIFFIISLISTISFA). The cysteines at positions 26 and 41 are disulfide-linked. The 147-residue stretch at 55 to 201 (TGLGTAGNTS…TTFLSDAEVK (147 aa)) folds into the Cupin type-1 domain. An N-linked (GlcNAc...) asparagine glycan is attached at Asn62. Mn(2+) is bound by residues His103, His105, and Glu110. The residue at position 140 (Ser140) is a Phosphoserine. His149 is a Mn(2+) binding site.

The protein belongs to the germin family. Oligomer (believed to be a pentamer but probably hexamer). Expressed in leaves and flowers.

It localises to the secreted. The protein localises to the extracellular space. Its subcellular location is the apoplast. May play a role in plant defense. Probably has no oxalate oxidase activity even if the active site is conserved. The polypeptide is Germin-like protein subfamily 3 member 3 (GER3) (Arabidopsis thaliana (Mouse-ear cress)).